The sequence spans 144 residues: MKTFSPTPENINREWFVVDAEDKILGRLATQIAHRLRGKHKPEFAPHMDNGDFIVVVNCEKIKVTGKKLDQKKYYNHSGYVGGLRETSLEKLLASKPEEVLLKAVRGMLPRNRLGRAMLTKLKVYRGTEHPHAAQKPTPLELTY.

The protein belongs to the universal ribosomal protein uL13 family. As to quaternary structure, part of the 50S ribosomal subunit.

Its function is as follows. This protein is one of the early assembly proteins of the 50S ribosomal subunit, although it is not seen to bind rRNA by itself. It is important during the early stages of 50S assembly. The chain is Large ribosomal subunit protein uL13 from Nitratidesulfovibrio vulgaris (strain ATCC 29579 / DSM 644 / CCUG 34227 / NCIMB 8303 / VKM B-1760 / Hildenborough) (Desulfovibrio vulgaris).